Consider the following 112-residue polypeptide: Putative pterin-4-alpha-carbinolamine dehydratase (112 aa).

This sequence belongs to the pterin-4-alpha-carbinolamine dehydratase family.

The catalysed reaction is (4aS,6R)-4a-hydroxy-L-erythro-5,6,7,8-tetrahydrobiopterin = (6R)-L-erythro-6,7-dihydrobiopterin + H2O. The polypeptide is Putative pterin-4-alpha-carbinolamine dehydratase (Shewanella oneidensis (strain ATCC 700550 / JCM 31522 / CIP 106686 / LMG 19005 / NCIMB 14063 / MR-1)).